Here is a 446-residue protein sequence, read N- to C-terminus: Eukaryotic translation initiation factor 3 subunit E (446 aa).

Residues 240–420 form the PCI domain; the sequence is PLFNDENSRE…GTVVMNHPNS (181 aa).

It belongs to the eIF-3 subunit E family. In terms of assembly, component of the eukaryotic translation initiation factor 3 (eIF-3) complex.

The protein resides in the cytoplasm. Functionally, component of the eukaryotic translation initiation factor 3 (eIF-3) complex, which is involved in protein synthesis of a specialized repertoire of mRNAs and, together with other initiation factors, stimulates binding of mRNA and methionyl-tRNAi to the 40S ribosome. The eIF-3 complex specifically targets and initiates translation of a subset of mRNAs involved in cell proliferation. The protein is Eukaryotic translation initiation factor 3 subunit E of Pyricularia oryzae (strain 70-15 / ATCC MYA-4617 / FGSC 8958) (Rice blast fungus).